Consider the following 1102-residue polypeptide: MPKRTDLKSVLVIGSGPIVIGQAAEFDYSGTQALRVLKEEGLRVILVNSNPATIMTDPEFADATYVEPITPEVVEKIIAKERPDAILPTLGGQTALNTAIALDKNGVLEKYNVELIGANIAAIELGEDREKFKGVVERCGAESARSHIIHTMEEAFAAAEDLGYPMVVRPSFTMGGLGSGLAYNEDDLRRIVGQGLQYSPTTEVLLEESILGWKEYELEMMRDKNDNVVVVCSIENFDPVGVHTGDSITVAPALTLTDREYQKLRDVSIAVIREVGVDTGGCNIQFAIDPATGRVVVIEMNPRVSRSSALASKATGFAIAKIATKLSLGYTLDEIPNDITQKTPASFEPTLDYVVVKVPRFAFEKFPAADNTLTTTMKSVGEAMAMGRNFTEALQKALRSLEQKGSQLDFSSVPEYEVAELIEKAKRPTTDRLHQVQRALLGGATVEDLFEATKIDPWFLDQLQLLNETAQEIRKAGVLTEEMLRNAKRHGFSDEQIGALTHNNEAVVRGVRQALGIRPVYKTVDTCAAEFAAYTPYHYSSYDEEDEVGLHAKPSVIILGSGPNRIGQGIEFDYSCVHASMALRKAGYETVMVNCNPETVSTDYDVSTRLYFEPLTLEDVLEVIAAEERTGGVMGVFVQLGGQTPLKLAQQLADAGVPILGTSPEAIDLAEHRGAFARVLDEAGLTSPKNGTAVSFEDAKKIADEIGYPVLVRPSYVLGGRGMEIVYDEANLSRYIANATEITPDHPVLIDRFLEDAVEIDVDALFDGTDMYLGGIMEHIEEAGIHSGDSACVLPPITLGNNVIERVRTATRAIAEGVGVRGLINIQFALASDVLYVLEANPRASRTVPFVSKATGVQMAKAAALIGTGVTINQLRGAYKMLPETGDGSTLPLDAPVAVKEAVLPFSRFRTPEGKVVDSLLGPEMRSTGEVMGIDKHFDTAFAKSQAAANNALPTEGKIFVSVANRDKRSVIMGVKRLSDLGFEIVSTGGTADVLRRNGIQATPVRKVAEGSSAEGEGTIADLVIAGEIDMVFNTPSGGEARSDGYELRAAATSIGIPCITTVAEFNAAVQAIEALRTYEWSVTSLQEHAANLSAAMEAANA.

The interval 1-402 (MPKRTDLKSV…ALQKALRSLE (402 aa)) is carboxyphosphate synthetic domain. Residues R129, R169, G175, G176, E208, I210, E215, G241, V242, H243, Q285, and E299 each contribute to the ATP site. The region spanning 133 to 328 (KGVVERCGAE…IAKIATKLSL (196 aa)) is the ATP-grasp 1 domain. Positions 285, 299, and 301 each coordinate Mg(2+). 3 residues coordinate Mn(2+): Q285, E299, and N301. Positions 403-546 (QKGSQLDFSS…YHYSSYDEED (144 aa)) are oligomerization domain. The carbamoyl phosphate synthetic domain stretch occupies residues 547–950 (EVGLHAKPSV…AFAKSQAAAN (404 aa)). The ATP-grasp 2 domain occupies 677 to 868 (ARVLDEAGLT…MAKAAALIGT (192 aa)). Positions 713, 752, 754, 759, 784, 785, 786, 787, 827, and 839 each coordinate ATP. Mg(2+) contacts are provided by Q827, E839, and N841. 3 residues coordinate Mn(2+): Q827, E839, and N841. The 146-residue stretch at 951-1096 (NALPTEGKIF…QEHAANLSAA (146 aa)) folds into the MGS-like domain. The allosteric domain stretch occupies residues 951–1102 (NALPTEGKIF…LSAAMEAANA (152 aa)).

It belongs to the CarB family. As to quaternary structure, composed of two chains; the small (or glutamine) chain promotes the hydrolysis of glutamine to ammonia, which is used by the large (or ammonia) chain to synthesize carbamoyl phosphate. Tetramer of heterodimers (alpha,beta)4. The cofactor is Mg(2+). Mn(2+) serves as cofactor.

The enzyme catalyses hydrogencarbonate + L-glutamine + 2 ATP + H2O = carbamoyl phosphate + L-glutamate + 2 ADP + phosphate + 2 H(+). It catalyses the reaction hydrogencarbonate + NH4(+) + 2 ATP = carbamoyl phosphate + 2 ADP + phosphate + 2 H(+). Its pathway is amino-acid biosynthesis; L-arginine biosynthesis; carbamoyl phosphate from bicarbonate: step 1/1. It participates in pyrimidine metabolism; UMP biosynthesis via de novo pathway; (S)-dihydroorotate from bicarbonate: step 1/3. Its function is as follows. Large subunit of the glutamine-dependent carbamoyl phosphate synthetase (CPSase). CPSase catalyzes the formation of carbamoyl phosphate from the ammonia moiety of glutamine, carbonate, and phosphate donated by ATP, constituting the first step of 2 biosynthetic pathways, one leading to arginine and/or urea and the other to pyrimidine nucleotides. The large subunit (synthetase) binds the substrates ammonia (free or transferred from glutamine from the small subunit), hydrogencarbonate and ATP and carries out an ATP-coupled ligase reaction, activating hydrogencarbonate by forming carboxy phosphate which reacts with ammonia to form carbamoyl phosphate. This chain is Carbamoyl phosphate synthase large chain, found in Paenarthrobacter aurescens (strain TC1).